Consider the following 36-residue polypeptide: Photosystem II reaction center protein M (36 aa).

The helical transmembrane segment at 5 to 25 (ILGLIATALFIIIPTSFLLIL) threads the bilayer.

The protein belongs to the PsbM family. As to quaternary structure, PSII is composed of 1 copy each of membrane proteins PsbA, PsbB, PsbC, PsbD, PsbE, PsbF, PsbH, PsbI, PsbJ, PsbK, PsbL, PsbM, PsbT, PsbX, PsbY, PsbZ, Psb30/Ycf12, at least 3 peripheral proteins of the oxygen-evolving complex and a large number of cofactors. It forms dimeric complexes.

It is found in the plastid. The protein resides in the chloroplast thylakoid membrane. One of the components of the core complex of photosystem II (PSII). PSII is a light-driven water:plastoquinone oxidoreductase that uses light energy to abstract electrons from H(2)O, generating O(2) and a proton gradient subsequently used for ATP formation. It consists of a core antenna complex that captures photons, and an electron transfer chain that converts photonic excitation into a charge separation. This subunit is found at the monomer-monomer interface. The protein is Photosystem II reaction center protein M of Chlorokybus atmophyticus (Soil alga).